Consider the following 446-residue polypeptide: Citrate/sodium symporter (446 aa).

The next 5 membrane-spanning stretches (helical) occupy residues 23–43, 46–66, 79–99, 110–130, and 148–168; these read IFGMPLPLYAFALITLLLSHF, AIPTDLVGGFALMFVMGAIFG, IGGAPVMIFLVAAYFVYAGIF, VMDKSNFLNLFIAVLITGAIL, and ILAGIVGASLFGIVIGLCFGI. 2 residues coordinate Na(+): isoleucine 181 and glycine 183. Positions 186 and 187 each coordinate citrate. Transmembrane regions (helical) follow at residues 213–233, 267–287, 289–309, 335–355, and 364–384; these read IAILTIANIFAIIFAALLDMI, ETAVGMVLSTTCFLLAYVVAK, ILPSIGGVSIHYFAWMVLIVA, QLLWVLMVGVGVCYTDLQEII, and VIAAIIVVGAVVGAAIGGWLI. Residues methionine 399 and asparagine 401 each contribute to the Na(+) site. Positions 402, 404, 405, and 428 each coordinate citrate. Residues 425-445 form a helical membrane-spanning segment; it reads ISSRLGGGIVLVIASIVFSMM.

The protein belongs to the 2-hydroxycarboxylate transporter (2-HCT) (TC 2.A.24) family. As to quaternary structure, homodimer.

The protein localises to the cell inner membrane. The enzyme catalyses citrate(out) + 2 Na(+)(out) = citrate(in) + 2 Na(+)(in). Functionally, secondary active transporter that catalyzes the uptake of citrate across the membrane with the concomitant uptake of sodium. Is specific for citrate. This Salmonella pullorum protein is Citrate/sodium symporter.